The primary structure comprises 282 residues: MAHQLKLLKDDFFASDQQAVAVADRYPQDVFAEHTHDFCELVIVWRGNGLHVLNDRPYRITRGDLFYIHADDKHSYASVNDLVLQNIIYCPERLKLNLDWQGAIPGFNASAGQPHWRLGSMGMAQARQVIGQLEHESSQHVPFANEMAELLFGQLVMLLNRHRYTSDSLPPTSSETLLDKLITRLAASLKSPFALDKFCDEASCSERVLRQQFRQQTGMTINQYLRQVRVCHAQYLLQHSRLLISDISTECGFEDSNYFSVVFTRETGMTPSQWRHLNSQKD.

In terms of domain architecture, HTH araC/xylS-type spans 179–277 (DKLITRLAAS…GMTPSQWRHL (99 aa)). 2 DNA-binding regions (H-T-H motif) span residues 196-217 (DKFC…RQQT) and 244-267 (ISDI…TRET).

In terms of assembly, binds DNA as a dimer.

Its subcellular location is the cytoplasm. Functionally, activates expression of the rhaSR operon in response to L-rhamnose. The polypeptide is HTH-type transcriptional activator RhaR (Escherichia coli (strain K12 / MC4100 / BW2952)).